The sequence spans 150 residues: Ribonuclease pancreatic delta-type (150 aa).

The first 25 residues, 1 to 25 (MGLEKSFILFSLLVLVLGWVQPSLG), serve as a signal peptide directing secretion. Arg-35 contributes to the substrate binding site. His-37 functions as the Proton acceptor in the catalytic mechanism. Disulfide bonds link Cys-51/Cys-110, Cys-65/Cys-121, and Cys-83/Cys-136. Substrate contacts are provided by residues 66–70 (KRVNT), Lys-91, and Arg-111. The active-site Proton donor is the His-145.

This sequence belongs to the pancreatic ribonuclease family. As to quaternary structure, monomer.

Its subcellular location is the secreted. It carries out the reaction an [RNA] containing cytidine + H2O = an [RNA]-3'-cytidine-3'-phosphate + a 5'-hydroxy-ribonucleotide-3'-[RNA].. The catalysed reaction is an [RNA] containing uridine + H2O = an [RNA]-3'-uridine-3'-phosphate + a 5'-hydroxy-ribonucleotide-3'-[RNA].. In terms of biological role, endonuclease that catalyzes the cleavage of RNA on the 3' side of pyrimidine nucleotides. Acts on single-stranded and double-stranded RNA. The sequence is that of Ribonuclease pancreatic delta-type from Rattus rattus (Black rat).